The following is a 530-amino-acid chain: Glucose-6-phosphate isomerase (530 aa).

Catalysis depends on Glu322, which acts as the Proton donor. Residues His351 and Lys455 contribute to the active site.

The protein belongs to the GPI family.

It is found in the cytoplasm. The enzyme catalyses alpha-D-glucose 6-phosphate = beta-D-fructose 6-phosphate. The protein operates within carbohydrate biosynthesis; gluconeogenesis. It functions in the pathway carbohydrate degradation; glycolysis; D-glyceraldehyde 3-phosphate and glycerone phosphate from D-glucose: step 2/4. Catalyzes the reversible isomerization of glucose-6-phosphate to fructose-6-phosphate. The sequence is that of Glucose-6-phosphate isomerase from Citrifermentans bemidjiense (strain ATCC BAA-1014 / DSM 16622 / JCM 12645 / Bem) (Geobacter bemidjiensis).